The following is a 325-amino-acid chain: uncharacterized protein (325 aa).

The disordered stretch occupies residues 108 to 141; it reads PHRTQGISSTSSKSSKGGKKTPVRSTPKEIKKAT.

This is an uncharacterized protein from Homo sapiens (Human).